Reading from the N-terminus, the 157-residue chain is Protein Smg homolog (157 aa).

This sequence belongs to the Smg family.

This Aliivibrio fischeri (strain ATCC 700601 / ES114) (Vibrio fischeri) protein is Protein Smg homolog.